A 271-amino-acid polypeptide reads, in one-letter code: Secretagogin (271 aa).

EF-hand domains are found at residues 8–43 (LDAAEFLEIWQRFDADDNGYIEGKELDEFFCHLLKK), 53–88 (KVQGVKDRFMSAYDITADGRLQIQELANMILPEDEN), 100–135 (DNSVEFMRIWRKFDEDSSGFISAVELRNFLQDLFLQ), 144–179 (KLDEYTDTMMKLFNRNKDGRLDLNDLAKILALQENF), 192–227 (ERKSDFETIFAHYDVSKTGALEGPEVDGFVKDMMEL), and 235–271 (VDLDKFRQILLNHCDVNKDGKIQKSELALCLGLKANP). Positions 21, 23, 25, 27, and 32 each coordinate Ca(2+). 17 residues coordinate Ca(2+): aspartate 113, aspartate 115, serine 117, glutamate 124, asparagine 159, aspartate 161, arginine 163, aspartate 168, aspartate 205, serine 207, threonine 209, glutamate 216, aspartate 249, asparagine 251, aspartate 253, lysine 255, and glutamate 260.

It localises to the cytoplasm. This chain is Secretagogin (scgn), found in Xenopus laevis (African clawed frog).